We begin with the raw amino-acid sequence, 283 residues long: Elongation factor Ts (283 aa).

The involved in Mg(2+) ion dislocation from EF-Tu stretch occupies residues 79 to 82 (TDFV).

Belongs to the EF-Ts family.

It is found in the cytoplasm. In terms of biological role, associates with the EF-Tu.GDP complex and induces the exchange of GDP to GTP. It remains bound to the aminoacyl-tRNA.EF-Tu.GTP complex up to the GTP hydrolysis stage on the ribosome. The sequence is that of Elongation factor Ts from Shewanella sp. (strain ANA-3).